The following is a 147-amino-acid chain: Large ribosomal subunit protein bL21 (147 aa).

The tract at residues 125 to 147 is disordered; it reads EEVEAAPKAKKAAPKAKKEATKE.

This sequence belongs to the bacterial ribosomal protein bL21 family. As to quaternary structure, part of the 50S ribosomal subunit. Contacts protein L20.

Functionally, this protein binds to 23S rRNA in the presence of protein L20. The protein is Large ribosomal subunit protein bL21 of Flavobacterium johnsoniae (strain ATCC 17061 / DSM 2064 / JCM 8514 / BCRC 14874 / CCUG 350202 / NBRC 14942 / NCIMB 11054 / UW101) (Cytophaga johnsonae).